Consider the following 278-residue polypeptide: 4-deoxy-L-threo-5-hexosulose-uronate ketol-isomerase (278 aa).

Residues His-196, His-198, Glu-203, and His-245 each coordinate Zn(2+).

Belongs to the KduI family. Zn(2+) is required as a cofactor.

It catalyses the reaction 5-dehydro-4-deoxy-D-glucuronate = 3-deoxy-D-glycero-2,5-hexodiulosonate. The protein operates within glycan metabolism; pectin degradation; 2-dehydro-3-deoxy-D-gluconate from pectin: step 4/5. Catalyzes the isomerization of 5-dehydro-4-deoxy-D-glucuronate to 3-deoxy-D-glycero-2,5-hexodiulosonate. The protein is 4-deoxy-L-threo-5-hexosulose-uronate ketol-isomerase of Burkholderia cenocepacia (strain ATCC BAA-245 / DSM 16553 / LMG 16656 / NCTC 13227 / J2315 / CF5610) (Burkholderia cepacia (strain J2315)).